Reading from the N-terminus, the 516-residue chain is L-amino-acid oxidase (516 aa).

The first 18 residues, 1–18 (MNVFFMFSLLFLAALGSC), serve as a signal peptide directing secretion. C28 and C189 are joined by a disulfide. FAD contacts are provided by residues 61–62 (MA), 81–82 (EA), R89, and 103–106 (GPMR). Substrate-binding residues include R106 and H239. V279 serves as a coordination point for FAD. A disulfide bridge links C349 with C430. N379 carries an N-linked (GlcNAc...) asparagine glycan. Y390 serves as a coordination point for substrate. Residues E475 and 482–487 (GWIDST) each bind FAD. 482–483 (GW) serves as a coordination point for substrate.

This sequence belongs to the flavin monoamine oxidase family. FIG1 subfamily. As to quaternary structure, homodimer; non-covalently linked. It depends on FAD as a cofactor. In terms of processing, N-glycosylated. Expressed by the venom gland.

It localises to the secreted. The enzyme catalyses an L-alpha-amino acid + O2 + H2O = a 2-oxocarboxylate + H2O2 + NH4(+). It carries out the reaction L-leucine + O2 + H2O = 4-methyl-2-oxopentanoate + H2O2 + NH4(+). The catalysed reaction is L-phenylalanine + O2 + H2O = 3-phenylpyruvate + H2O2 + NH4(+). It catalyses the reaction L-methionine + O2 + H2O = 4-methylsulfanyl-2-oxobutanoate + H2O2 + NH4(+). The enzyme catalyses L-arginine + O2 + H2O = 5-guanidino-2-oxopentanoate + H2O2 + NH4(+). Its function is as follows. Catalyzes an oxidative deamination of predominantly hydrophobic and aromatic L-amino acids, thus producing hydrogen peroxide that may contribute to the diverse toxic effects of this enzyme. Is active on L-Arg, L-Phe, L-Met, and L-Leu and is weakly active on L-Val. Exhibits diverse biological activities, such as hemorrhage, hemolysis, edema, apoptosis of vascular endothelial cells or tumor cell lines, antibacterial and antiparasitic activities, as well as regulation of platelet aggregation. Its effect on platelets is controversial, since it either induces aggregation or inhibits agonist-induced aggregation. These different effects are probably due to different experimental conditions. In Crotalus adamanteus (Eastern diamondback rattlesnake), this protein is L-amino-acid oxidase.